The sequence spans 1072 residues: DNA-directed RNA polymerase subunit beta (1072 aa).

This sequence belongs to the RNA polymerase beta chain family. In plastids the minimal PEP RNA polymerase catalytic core is composed of four subunits: alpha, beta, beta', and beta''. When a (nuclear-encoded) sigma factor is associated with the core the holoenzyme is formed, which can initiate transcription.

The protein resides in the plastid. It localises to the chloroplast. It carries out the reaction RNA(n) + a ribonucleoside 5'-triphosphate = RNA(n+1) + diphosphate. Its function is as follows. DNA-dependent RNA polymerase catalyzes the transcription of DNA into RNA using the four ribonucleoside triphosphates as substrates. This is DNA-directed RNA polymerase subunit beta from Draba nemorosa (Woodland whitlowgrass).